A 231-amino-acid polypeptide reads, in one-letter code: Lipoprotein-releasing system ATP-binding protein LolD 2 (231 aa).

In terms of domain architecture, ABC transporter spans 6-230 (VEARSLSKSF…DGRLVGQDPA (225 aa)). 42-49 (GPSGSGKS) serves as a coordination point for ATP.

Belongs to the ABC transporter superfamily. Lipoprotein translocase (TC 3.A.1.125) family. As to quaternary structure, the complex is composed of two ATP-binding proteins (LolD) and two transmembrane proteins (LolC and LolE).

Its subcellular location is the cell inner membrane. Its function is as follows. Part of the ABC transporter complex LolCDE involved in the translocation of mature outer membrane-directed lipoproteins, from the inner membrane to the periplasmic chaperone, LolA. Responsible for the formation of the LolA-lipoprotein complex in an ATP-dependent manner. In Rhodospirillum rubrum (strain ATCC 11170 / ATH 1.1.1 / DSM 467 / LMG 4362 / NCIMB 8255 / S1), this protein is Lipoprotein-releasing system ATP-binding protein LolD 2.